Here is a 1574-residue protein sequence, read N- to C-terminus: Myosin-2 (1574 aa).

N-acetylserine is present on Ser-2. The Myosin N-terminal SH3-like domain maps to 4–57 (EVGTRCWYPHKELGWIGAEVIKNEFNDGKYHLELQLEDDEIVSVDTKDLNNDKD). The Myosin motor domain maps to 70 to 781 (EATEDLTSLS…MLAYLEKLRS (712 aa)). 164–171 (GESGAGKT) contributes to the ATP binding site. The tract at residues 443–523 (FIGVLDIYGF…LGILSLLDEE (81 aa)) is actin-binding. IQ domains follow at residues 784–806 (MHNS…QYLQ), 807–831 (ISQA…NDEM), 832–855 (KVNC…VFSV), 856–879 (LRTI…KQEH), 880–902 (EYNA…RFLR), and 903–932 (TKKD…DAKS). Residues 933–1088 (VNHLKEVSYK…RLQTAMSLGT (156 aa)) are a coiled coil. The tract at residues 1087 to 1574 (GTVTTSVLPQ…VAQQVVQDGH (488 aa)) is non alpha-helical, tail domain. Thr-1097 bears the Phosphothreonine mark. Residue Ser-1121 is modified to Phosphoserine. Residues 1226–1501 (AQVLTTIQKV…LRYVADIVKK (276 aa)) form the Dilute domain.

It belongs to the TRAFAC class myosin-kinesin ATPase superfamily. Myosin family. As to quaternary structure, homodimer. Interacts with calmodulin (CMD1) and the myosin light chain MLC1 through its IQ repeats. Binds to the membrane receptors SEC4 and VAC17 to transport secretory vesicles and the vacuole, respectively. Binds to KAR9, which transports BIM1-coated cytoplasmic microtubules that are attached to the spindle pole body into the emerging bud, thereby correctly orienting the mitotic spindle. Interacts with YPT11 and MMR1 to accelerate mitochondrial distribution to the bud. Interacts with SHE4 and localizes it to the bud tip. Interacts with RHO3 and SMY1, putative regulators of MYO2 function. Interacts with SRO7.

Its subcellular location is the bud neck. The protein localises to the bud tip. In terms of biological role, myosin heavy chain that is required for the cell cycle-regulated transport of various organelles and proteins for their segregation. Functions by binding with its tail domain to receptor proteins on organelles and exerting force with its N-terminal motor domain against actin filaments, thereby transporting its cargo along polarized actin cables. Essential for the delivery of secretory vesicles to sites of active growth during bud emergence and cytokinesis. Required for segregation and inheritance of peroxisomes, late Golgi compartments, mitochondria and the vacuole to the daughter cell during cell division. Also required for correct alignment of the spindle during mitosis. The chain is Myosin-2 (MYO2) from Saccharomyces cerevisiae (strain ATCC 204508 / S288c) (Baker's yeast).